We begin with the raw amino-acid sequence, 618 residues long: MPIQVLPPQLANQIAAGEVVERPASVVKELVENSLDAGATRVDIDIERGGAKLIRIRDNGCGIKKEELALALARHATSKIASLDDLEAIISLGFRGEALASISSVSRLTLTSRTAEQAEAWQAYAEGRDMDVTVKPAAHPVGTTLEVLDLFYNTPARRKFMRTEKTEFNHIDEIIRRIALARFDVTLNLSHNGKLVRQYRAVAKDGQKERRLGAICGTPFLEQALAIEWQHGDLTLRGWVADPNHTTTALTEIQYCYVNGRMMRDRLINHAIRQACEDKLGADQQPAFVLYLEIDPHQVDVNVHPAKHEVRFHQSRLVHDFIYQGVLSVLQQQTETTLPLEEIAPAPRHVPENRIAAGRNHFAVPAEPTAAREPATPRYSGGASGGNGGRQSAGGWPHAQPGYQKQQGEVYRALLQTPATSPAPEPVAPALDGHSQSFGRVLTIVGGDCALLEHAGTIQLLSLPVAERWLRQAQLTPGQSPVCAQPLLIPLRLKVSADEKAALQKAQSLLGELGIEFQSDAQHVTIRAVPLPLRQQNLQILIPELIGYLAQQTTFATVNIAQWIARNVQSEHPQWSMAQAISLLADVERLCPQLVKAPPGGLLQPVDLHSAMSALKHE.

The span at glutamate 367–glycine 381 shows a compositional bias: low complexity. The segment at glutamate 367–glycine 402 is disordered. Residues glycine 382–serine 392 show a composition bias toward gly residues.

The protein belongs to the DNA mismatch repair MutL/HexB family.

Its function is as follows. This protein is involved in the repair of mismatches in DNA. It is required for dam-dependent methyl-directed DNA mismatch repair. May act as a 'molecular matchmaker', a protein that promotes the formation of a stable complex between two or more DNA-binding proteins in an ATP-dependent manner without itself being part of a final effector complex. The sequence is that of DNA mismatch repair protein MutL from Salmonella gallinarum (strain 287/91 / NCTC 13346).